A 589-amino-acid polypeptide reads, in one-letter code: TAF5-like RNA polymerase II p300/CBP-associated factor-associated factor 65 kDa subunit 5L (589 aa).

Residues A211–N221 are compositionally biased toward polar residues. A disordered region spans residues A211–S230. WD repeat units follow at residues N266–E305, G340–L379, G382–I421, G424–L463, G466–E505, and G508–P547.

The protein belongs to the WD repeat TAF5 family. In terms of assembly, the PCAF complex is composed of a number of TBP-associated factors (TAFS), such as TAF5, TAF5L, TAF6, TAF6L, TAF9, TAF10 and TAF12, PCAF, and also PCAF-associated factors (PAFs), such as TADA2L/ADA2, TADA3L/ADA3 and SPT3. Component of the STAGA transcription coactivator-HAT complex, at least composed of SUPT3H, GCN5L2, TAF5L, TAF6L, SUPT7L, TADA3L, TAD1L, TAF10, TAF12, TRRAP and TAF9.

The protein resides in the nucleus. Functionally, functions as a component of the PCAF complex. The PCAF complex is capable of efficiently acetylating histones in a nucleosomal context. The PCAF complex could be considered as the human version of the yeast SAGA complex. With TAF6L, acts as an epigenetic regulator essential for somatic reprogramming. Regulates target genes through H3K9ac deposition and MYC recruitment which trigger MYC regulatory network to orchestrate gene expression programs to control embryonic stem cell state. In Homo sapiens (Human), this protein is TAF5-like RNA polymerase II p300/CBP-associated factor-associated factor 65 kDa subunit 5L.